A 510-amino-acid polypeptide reads, in one-letter code: Alpha-L-arabinofuranosidase B (510 aa).

The first 24 residues, 1–24 (MTMSRSSRSSVLALALATGSLVAA), serve as a signal peptide directing secretion. The catalytic stretch occupies residues 25 to 342 (GPCDIYSSGG…ADIVAAKYAT (318 aa)). Cystine bridges form between Cys27–Cys37, Cys87–Cys92, and Cys182–Cys183. A glycan (N-linked (GlcNAc...) asparagine) is linked at Asn89. Asp225 lines the substrate pocket. The active-site Nucleophile is the Glu227. The substrate site is built by Asn228 and Gly303. Residue Asp304 is the Proton donor of the active site. Residues 343-510 (TSLISGPALT…VSWVVADGFA (168 aa)) form an ABD region. Residues Cys412 and Cys450 are joined by a disulfide bond. Substrate contacts are provided by His427, Asn429, Phe430, Asp446, His475, Glu477, Leu480, and Asp500.

The protein belongs to the glycosyl hydrolase 54 family.

It is found in the secreted. It catalyses the reaction Hydrolysis of terminal non-reducing alpha-L-arabinofuranoside residues in alpha-L-arabinosides.. It functions in the pathway glycan metabolism; L-arabinan degradation. Functionally, alpha-L-arabinofuranosidase involved in the degradation of arabinoxylan, a major component of plant hemicellulose. Able to hydrolyze 1,5-, 1,3- and 1,2-alpha-linkages not only in L-arabinofuranosyl oligosaccharides, but also in polysaccharides containing terminal non-reducing L-arabinofuranoses in side chains, like L-arabinan, arabinogalactan and arabinoxylan. This chain is Alpha-L-arabinofuranosidase B (abfB), found in Emericella nidulans (strain FGSC A4 / ATCC 38163 / CBS 112.46 / NRRL 194 / M139) (Aspergillus nidulans).